The primary structure comprises 141 residues: Large ribosomal subunit protein uL11 (141 aa).

Belongs to the universal ribosomal protein uL11 family. Part of the ribosomal stalk of the 50S ribosomal subunit. Interacts with L10 and the large rRNA to form the base of the stalk. L10 forms an elongated spine to which L12 dimers bind in a sequential fashion forming a multimeric L10(L12)X complex. Post-translationally, one or more lysine residues are methylated.

Functionally, forms part of the ribosomal stalk which helps the ribosome interact with GTP-bound translation factors. The polypeptide is Large ribosomal subunit protein uL11 (Helicobacter pylori (strain P12)).